Reading from the N-terminus, the 180-residue chain is MKKVEDYIRTIPDFPEPGIMFRDVTSILQDAEGFKLAIDEMIKLLDGVDCDVIAGAESRGFIFGAPLAYALGKPSVLVRKKGKLPCETIEKTYDLEYGTATIEMHKDAIKPGQKVVVVDDLIATGGTIEAACQLIEELGGEVSKIVFLMELAGLNGREKLKYDVASVCYLRGKIITDFLG.

It belongs to the purine/pyrimidine phosphoribosyltransferase family. As to quaternary structure, homodimer.

The protein localises to the cytoplasm. It carries out the reaction AMP + diphosphate = 5-phospho-alpha-D-ribose 1-diphosphate + adenine. It functions in the pathway purine metabolism; AMP biosynthesis via salvage pathway; AMP from adenine: step 1/1. Functionally, catalyzes a salvage reaction resulting in the formation of AMP, that is energically less costly than de novo synthesis. This chain is Adenine phosphoribosyltransferase, found in Butyrivibrio fibrisolvens.